The chain runs to 407 residues: Phosphoglycerate kinase (407 aa).

Residues 24 to 26 (DIN), Arg39, 60 to 63 (HQSR), Arg117, and Arg157 contribute to the substrate site. ATP-binding positions include Glu330 and 355–358 (GGHI).

This sequence belongs to the phosphoglycerate kinase family.

The protein resides in the cytoplasm. The catalysed reaction is (2R)-3-phosphoglycerate + ATP = (2R)-3-phospho-glyceroyl phosphate + ADP. It functions in the pathway carbohydrate degradation; glycolysis; pyruvate from D-glyceraldehyde 3-phosphate: step 2/5. This is Phosphoglycerate kinase (pgk) from Archaeoglobus fulgidus (strain ATCC 49558 / DSM 4304 / JCM 9628 / NBRC 100126 / VC-16).